The chain runs to 204 residues: Somatotropin (204 aa).

The N-terminal stretch at 1 to 17 (MDRAILLLSVLSVGVSS) is a signal peptide. Gln-18 carries the post-translational modification Pyrrolidone carboxylic acid. His-35 serves as a coordination point for Zn(2+). An intrachain disulfide couples Cys-69 to Cys-177. A Zn(2+)-binding site is contributed by Glu-186. Residues Cys-194 and Cys-202 are joined by a disulfide bond.

The protein belongs to the somatotropin/prolactin family.

Its subcellular location is the secreted. Growth hormone plays an important role in growth control and is involved in the regulation of several anabolic processes. Implicated as an osmoregulatory substance important for seawater adaptation. In Dicentrarchus labrax (European seabass), this protein is Somatotropin (gh).